The primary structure comprises 314 residues: Deoxyhypusine hydroxylase (314 aa).

Position 1 is an N-acetylmethionine (M1). HEAT-like PBS-type repeat units follow at residues 61–87 (LAHE…VLND), 94–120 (VRHE…SLSS), 188–214 (ERYA…SLSA), 219–245 (LRHE…VLRD), and 252–278 (VRHE…FSKD). Fe cation is bound by residues H63, E64, H96, and E97. Fe cation contacts are provided by H221, E222, H254, and E255.

The protein belongs to the deoxyhypusine hydroxylase family. Fe(2+) serves as cofactor.

The catalysed reaction is [eIF5A protein]-deoxyhypusine + AH2 + O2 = [eIF5A protein]-hypusine + A + H2O. The protein operates within protein modification; eIF5A hypusination. Functionally, catalyzes the hydroxylation of the N(6)-(4-aminobutyl)-L-lysine intermediate to form hypusine, an essential post-translational modification only found in mature eIF-5A factor. The protein is Deoxyhypusine hydroxylase of Arabidopsis thaliana (Mouse-ear cress).